The following is a 203-amino-acid chain: LexA repressor (203 aa).

Positions 28–47 (IREIGDEFGITAKGAYDHLK) form a DNA-binding region, H-T-H motif. Catalysis depends on for autocatalytic cleavage activity residues serine 127 and lysine 164.

It belongs to the peptidase S24 family. In terms of assembly, homodimer.

It carries out the reaction Hydrolysis of Ala-|-Gly bond in repressor LexA.. Its function is as follows. Represses a number of genes involved in the response to DNA damage (SOS response), including recA and lexA. In the presence of single-stranded DNA, RecA interacts with LexA causing an autocatalytic cleavage which disrupts the DNA-binding part of LexA, leading to derepression of the SOS regulon and eventually DNA repair. The sequence is that of LexA repressor from Leptospira borgpetersenii serovar Hardjo-bovis (strain JB197).